We begin with the raw amino-acid sequence, 26 residues long: Small toxic protein ShoB (26 aa).

A helical membrane pass occupies residues 7 to 24 (LIKRVIKIIIAVLQLILL).

It localises to the membrane. Functionally, toxic component of a type I toxin-antitoxin (TA) system. May be a toxic protein; overexpression causes cessation of growth and rapid membrane depolarization. Overexpression induces stress-response and a number of membrane protein genes. The sequence is that of Small toxic protein ShoB (shoB) from Escherichia coli (strain K12).